A 174-amino-acid chain; its full sequence is Auxin-responsive protein IAA2 (174 aa).

The EAR-like (transcriptional repression) motif lies at 16 to 20 (LCLGL). Residues 44 to 67 (FEETRDEEESTPPTKTQIVGWPPV) are disordered. Positions 77–164 (VSYVKVSMDG…SCKRLRIMKG (88 aa)) constitute a PB1 domain.

It belongs to the Aux/IAA family. In terms of assembly, homodimers and heterodimers. Interacts with the auxin-responsive protein IAA1. Interacts with TPL. Preferentially expressed in vegetative organs.

The protein resides in the nucleus. In terms of biological role, aux/IAA proteins are short-lived transcriptional factors that function as repressors of early auxin response genes at low auxin concentrations. Repression is thought to result from the interaction with auxin response factors (ARFs), proteins that bind to the auxin-responsive promoter element (AuxRE). Formation of heterodimers with ARF proteins may alter their ability to modulate early auxin response genes expression. The sequence is that of Auxin-responsive protein IAA2 (IAA2) from Arabidopsis thaliana (Mouse-ear cress).